Consider the following 388-residue polypeptide: Succinate--CoA ligase [ADP-forming] subunit beta (388 aa).

The 236-residue stretch at 9 to 244 (KQLFARYGLP…PSQEDPREAQ (236 aa)) folds into the ATP-grasp domain. ATP is bound by residues Lys-46, 53–55 (GRG), Glu-99, Thr-102, and Glu-107. The Mg(2+) site is built by Asn-199 and Asp-213. Substrate is bound by residues Asn-264 and 321 to 323 (GIV).

The protein belongs to the succinate/malate CoA ligase beta subunit family. In terms of assembly, heterotetramer of two alpha and two beta subunits. Mg(2+) serves as cofactor.

It carries out the reaction succinate + ATP + CoA = succinyl-CoA + ADP + phosphate. The catalysed reaction is GTP + succinate + CoA = succinyl-CoA + GDP + phosphate. Its pathway is carbohydrate metabolism; tricarboxylic acid cycle; succinate from succinyl-CoA (ligase route): step 1/1. Its function is as follows. Succinyl-CoA synthetase functions in the citric acid cycle (TCA), coupling the hydrolysis of succinyl-CoA to the synthesis of either ATP or GTP and thus represents the only step of substrate-level phosphorylation in the TCA. The beta subunit provides nucleotide specificity of the enzyme and binds the substrate succinate, while the binding sites for coenzyme A and phosphate are found in the alpha subunit. The polypeptide is Succinate--CoA ligase [ADP-forming] subunit beta (Photorhabdus laumondii subsp. laumondii (strain DSM 15139 / CIP 105565 / TT01) (Photorhabdus luminescens subsp. laumondii)).